The sequence spans 66 residues: MNLTFFGLCLACMGVSLAEGMLMNGLFKSAARQPDIIPQLRSLMIMGIAFIEGTFLVTLVFSFVIK.

2 consecutive transmembrane segments (helical) span residues 3 to 23 (LTFFGLCLACMGVSLAEGMLM) and 45 to 65 (IMGIAFIEGTFLVTLVFSFVI).

Belongs to the ATPase C chain family. In terms of assembly, F-type ATPases have 2 components, F(1) - the catalytic core - and F(0) - the membrane proton channel. F(1) has five subunits: alpha(3), beta(3), gamma(1), delta(1), epsilon(1). F(0) has three main subunits: a(1), b(2) and c(10-14). The alpha and beta chains form an alternating ring which encloses part of the gamma chain. F(1) is attached to F(0) by a central stalk formed by the gamma and epsilon chains, while a peripheral stalk is formed by the delta and b chains.

It is found in the cell membrane. In terms of biological role, f(1)F(0) ATP synthase produces ATP from ADP in the presence of a proton or sodium gradient. F-type ATPases consist of two structural domains, F(1) containing the extramembraneous catalytic core and F(0) containing the membrane proton channel, linked together by a central stalk and a peripheral stalk. During catalysis, ATP synthesis in the catalytic domain of F(1) is coupled via a rotary mechanism of the central stalk subunits to proton translocation. Functionally, key component of the F(0) channel; it plays a direct role in translocation across the membrane. A homomeric c-ring of between 10-14 subunits forms the central stalk rotor element with the F(1) delta and epsilon subunits. This chain is ATP synthase subunit c (atpE), found in Streptococcus oralis.